Here is a 166-residue protein sequence, read N- to C-terminus: Flagellar protein LafL (166 aa).

A helical transmembrane segment spans residues 6-26 (MIAMFIAMIITSALVSAATIM).

It belongs to the FliL family.

The protein resides in the cell inner membrane. In terms of biological role, controls the rotational direction of flagella during chemotaxis. This is Flagellar protein LafL (lafL) from Vibrio parahaemolyticus serotype O3:K6 (strain RIMD 2210633).